The following is a 411-amino-acid chain: Argininosuccinate synthase (411 aa).

ATP contacts are provided by residues 10-18 (AYSGGLDTS) and alanine 37. The L-citrulline site is built by tyrosine 89 and serine 94. Position 119 (glycine 119) interacts with ATP. Residues threonine 121, asparagine 125, and aspartate 126 each contribute to the L-aspartate site. An L-citrulline-binding site is contributed by asparagine 125. L-citrulline is bound by residues arginine 129, serine 178, serine 187, glutamate 263, and tyrosine 275.

It belongs to the argininosuccinate synthase family. Type 1 subfamily. Homotetramer.

Its subcellular location is the cytoplasm. It catalyses the reaction L-citrulline + L-aspartate + ATP = 2-(N(omega)-L-arginino)succinate + AMP + diphosphate + H(+). It functions in the pathway amino-acid biosynthesis; L-arginine biosynthesis; L-arginine from L-ornithine and carbamoyl phosphate: step 2/3. This chain is Argininosuccinate synthase, found in Aeromonas hydrophila subsp. hydrophila (strain ATCC 7966 / DSM 30187 / BCRC 13018 / CCUG 14551 / JCM 1027 / KCTC 2358 / NCIMB 9240 / NCTC 8049).